A 118-amino-acid polypeptide reads, in one-letter code: UPF0342 protein BT9727_0768 (118 aa).

Belongs to the UPF0342 family.

This Bacillus thuringiensis subsp. konkukian (strain 97-27) protein is UPF0342 protein BT9727_0768.